The primary structure comprises 335 residues: S-adenosylmethionine:tRNA ribosyltransferase-isomerase (335 aa).

This sequence belongs to the QueA family. In terms of assembly, monomer.

The protein resides in the cytoplasm. The enzyme catalyses 7-aminomethyl-7-carbaguanosine(34) in tRNA + S-adenosyl-L-methionine = epoxyqueuosine(34) in tRNA + adenine + L-methionine + 2 H(+). It functions in the pathway tRNA modification; tRNA-queuosine biosynthesis. Its function is as follows. Transfers and isomerizes the ribose moiety from AdoMet to the 7-aminomethyl group of 7-deazaguanine (preQ1-tRNA) to give epoxyqueuosine (oQ-tRNA). This is S-adenosylmethionine:tRNA ribosyltransferase-isomerase from Thermotoga petrophila (strain ATCC BAA-488 / DSM 13995 / JCM 10881 / RKU-1).